Here is a 181-residue protein sequence, read N- to C-terminus: Translation initiation factor IF-3, chloroplastic (181 aa).

The protein belongs to the IF-3 family. As to quaternary structure, monomer.

Its subcellular location is the plastid. It localises to the chloroplast. Its function is as follows. IF-3 binds to the 30S ribosomal subunit and shifts the equilibrium between 70S ribosomes and their 50S and 30S subunits in favor of the free subunits, thus enhancing the availability of 30S subunits on which protein synthesis initiation begins. The chain is Translation initiation factor IF-3, chloroplastic from Galdieria sulphuraria (Red alga).